The chain runs to 124 residues: Small ribosomal subunit protein uS12 (124 aa).

Residues 1–32 (MPTIQQLVRKGRQDKVSKNKTPALKGSPQRRG) are disordered. Asp-89 bears the 3-methylthioaspartic acid mark.

Belongs to the universal ribosomal protein uS12 family. In terms of assembly, part of the 30S ribosomal subunit. Contacts proteins S8 and S17. May interact with IF1 in the 30S initiation complex.

In terms of biological role, with S4 and S5 plays an important role in translational accuracy. Interacts with and stabilizes bases of the 16S rRNA that are involved in tRNA selection in the A site and with the mRNA backbone. Located at the interface of the 30S and 50S subunits, it traverses the body of the 30S subunit contacting proteins on the other side and probably holding the rRNA structure together. The combined cluster of proteins S8, S12 and S17 appears to hold together the shoulder and platform of the 30S subunit. The chain is Small ribosomal subunit protein uS12 from Nocardioides sp. (strain ATCC BAA-499 / JS614).